The sequence spans 402 residues: MKIAVAGSGYVGLSLGVLLSLQNEVTIVDILPSKVDKINNGLSPIQDEYIEYYLKSKQLSIKATLDSKAAYKEAELVIIATPTNYNSRINYFDTQHVETVIKEVLSVNSHATLIIKSTIPIGFITEMRQKFQTDRIIFSPEFLRESKALYDNLYPSRIIVSCEENDSPKVKADAEKFALLLKSAAKKNNVPVLIMGASEAEAVKLFANTYLALRVAYFNELDTYAESRKLNSHMIIQGISYDDRIGMHYNNPSFGYGGYCLPKDTKQLLANYNNIPQTLIEAIVSSNNVRKSYIAKQIINVLEERESPVKVVGVYRLIMKSNSDNFRESAIKDVIDILKSKDIKIIIYEPMLNKLESEDQSVLVNDLENFKKQANIIVTNRYDNELQDVKNKVYSRDIFNRD.

NAD(+) contacts are provided by residues 2–19 (KIAV…GVLL), Val-11, Asp-29, Lys-34, Thr-83, Thr-118, and Glu-145. Residues 141 to 145 (EFLRE), Lys-204, Asn-208, 249 to 253 (YNNPS), and Gly-257 each bind substrate. Tyr-259 is a binding site for NAD(+). The active-site Nucleophile is the Cys-260. NAD(+) is bound at residue Lys-263. Substrate is bound at residue Lys-320. Residue Arg-327 coordinates NAD(+).

The protein belongs to the UDP-glucose/GDP-mannose dehydrogenase family.

The enzyme catalyses UDP-alpha-D-glucose + 2 NAD(+) + H2O = UDP-alpha-D-glucuronate + 2 NADH + 3 H(+). It functions in the pathway nucleotide-sugar biosynthesis; UDP-alpha-D-glucuronate biosynthesis; UDP-alpha-D-glucuronate from UDP-alpha-D-glucose: step 1/1. Functionally, catalyzes the formation of UDP-glucuronic acid which is required for capsular hyaluronic acid synthesis. In Streptococcus pyogenes serotype M1, this protein is UDP-glucose 6-dehydrogenase (hasB).